The sequence spans 509 residues: Maturase K (509 aa).

It belongs to the intron maturase 2 family. MatK subfamily.

The protein resides in the plastid. Its subcellular location is the chloroplast. Its function is as follows. Usually encoded in the trnK tRNA gene intron. Probably assists in splicing its own and other chloroplast group II introns. The chain is Maturase K from Drimys granadensis.